Reading from the N-terminus, the 311-residue chain is Putative mitochondrial transporter UCP3 (311 aa).

Over 1 to 10 (MVGLQPSERP) the chain is Mitochondrial intermembrane. A helical membrane pass occupies residues 11–32 (PTTSVKFLAAGTAACFADLLTF). 3 Solcar repeats span residues 11 to 105 (PTTS…VKQF), 114 to 205 (SSII…IKEK), and 214 to 299 (DNFP…MKRA). The Mitochondrial matrix segment spans residues 33–76 (PLDTAKVRLQIQGENQAALAARSAQYRGVLGTILTMVRTEGPRS). A helical membrane pass occupies residues 77 to 99 (LYSGLVAGLQRQMSFASIRIGLY). Residues 100-119 (DSVKQFYTPKGSDHSSIITR) lie on the Mitochondrial intermembrane side of the membrane. A helical transmembrane segment spans residues 120–136 (ILAGCTTGAMAVTCAQP). At 137–182 (TDVVKIRFQASMHTGLGGNRKYSGTMDAYRTIAREEGVRGLWKGIL) the chain is on the mitochondrial matrix side. A helical transmembrane segment spans residues 183-199 (PNITRNAIVNCGEMVTY). Residues 200–216 (DIIKEKLLDYHLLTDNF) lie on the Mitochondrial intermembrane side of the membrane. The helical transmembrane segment at 217–236 (PCHFVSAFGAGFCATLVASP) threads the bilayer. At 237–270 (VDVVKTRYMNSPPGQYHSPFDCMLKMVTQEGPTA) the chain is on the mitochondrial matrix side. The helical transmembrane segment at 271–293 (FYKGFTPSFLRLGSWNVVMFVTY) threads the bilayer. Positions 278–300 (SFLRLGSWNVVMFVTYEQMKRAL) are purine nucleotide binding. Residues 294–311 (EQMKRALMKVQMLRDSPF) lie on the Mitochondrial intermembrane side of the membrane.

This sequence belongs to the mitochondrial carrier (TC 2.A.29) family. Interacts with HAX1; the interaction is direct and calcium-dependent.

The protein localises to the mitochondrion inner membrane. In terms of biological role, putative transmembrane transporter that plays a role in mitochondrial metabolism via an as yet unclear mechanism. Originally, this mitochondrial protein was thought to act as a proton transmembrane transporter from the mitochondrial intermembrane space into the matrix, causing proton leaks through the inner mitochondrial membrane, thereby uncoupling mitochondrial membrane potential generation from ATP synthesis. However, this function is controversial and uncoupling may not be the function, or at least not the main function, but rather a consequence of more conventional metabolite transporter activity. This is Putative mitochondrial transporter UCP3 from Bos taurus (Bovine).